The chain runs to 119 residues: Flagellar transcriptional regulator FlhD (119 aa).

It belongs to the FlhD family. Homodimer; disulfide-linked. Forms a heterohexamer composed of two FlhC and four FlhD subunits. Each FlhC binds a FlhD dimer, forming a heterotrimer, and a hexamer assembles by dimerization of two heterotrimers.

The protein resides in the cytoplasm. Functionally, functions in complex with FlhC as a master transcriptional regulator that regulates transcription of several flagellar and non-flagellar operons by binding to their promoter region. Activates expression of class 2 flagellar genes, including fliA, which is a flagellum-specific sigma factor that turns on the class 3 genes. Also regulates genes whose products function in a variety of physiological pathways. The sequence is that of Flagellar transcriptional regulator FlhD from Shigella boydii serotype 4 (strain Sb227).